Consider the following 192-residue polypeptide: UPF0312 protein YE1254 (192 aa).

An N-terminal signal peptide occupies residues 1–23 (MFNKTLLGLTVGALMFTAGSAVA).

This sequence belongs to the UPF0312 family. Type 1 subfamily.

The protein localises to the periplasm. This is UPF0312 protein YE1254 from Yersinia enterocolitica serotype O:8 / biotype 1B (strain NCTC 13174 / 8081).